The sequence spans 795 residues: Endoplasmin (795 aa).

Residues 1 to 21 (MKSAWALALACTLLLAASVTA) form the signal peptide. The SRT pseudosubstrate motif signature appears at 41 to 43 (SRT). N-linked (GlcNAc...) asparagine glycosylation is found at asparagine 61 and asparagine 106. Asparagine 106, aspartate 148, asparagine 161, and phenylalanine 198 together coordinate ATP. An N-linked (GlcNAc...) asparagine glycan is attached at asparagine 216. A compositionally biased stretch (acidic residues) spans 289–316 (EEPVEEEEAKEEKEETDDNEAAVEEEEE). Residues 289–322 (EEPVEEEEAKEEKEETDDNEAAVEEEEEEKKPKT) are disordered. Residues asparagine 444, asparagine 480, and asparagine 501 are each glycosylated (N-linked (GlcNAc...) asparagine). Residues 751 to 795 (DAKVEEEPEEPEDAAEEAEQDEEEVDADAEDSETQKESTDVKDEL) form a disordered region. Residues 756–782 (EEPEEPEDAAEEAEQDEEEVDADAEDS) are compositionally biased toward acidic residues. Residues 783-795 (ETQKESTDVKDEL) show a composition bias toward basic and acidic residues. Residues 792 to 795 (KDEL) carry the Prevents secretion from ER motif.

The protein belongs to the heat shock protein 90 family. As to quaternary structure, homodimer; disulfide-linked.

The protein localises to the endoplasmic reticulum lumen. It localises to the sarcoplasmic reticulum lumen. It catalyses the reaction ATP + H2O = ADP + phosphate + H(+). Its function is as follows. ATP-dependent chaperone involved in the processing of proteins in the endoplasmic reticulum, regulating their transport. This is Endoplasmin (HSP90B1) from Gallus gallus (Chicken).